A 653-amino-acid chain; its full sequence is Protein CBFA2T3 (653 aa).

The span at 1–10 (MPASRLRDRA) shows a compositional bias: basic and acidic residues. Residues 1 to 109 (MPASRLRDRA…HTHREDGPAT (109 aa)) are disordered. Residues 1 to 127 (MPASRLRDRA…CLKWSMVCLL (127 aa)) form a required for nucleolar targeting (in isoform 1) region. Residues 1–430 (MPASRLRDRA…RRCQEADREE (430 aa)) are mediates interaction with PDE7A (in isoform 2). The tract at residues 1–435 (MPASRLRDRA…ADREELNHWA (435 aa)) is mediates localization to the nucleus. Positions 11 to 23 (ASSASGSTCGSMS) are enriched in low complexity. Over residues 75–86 (STPPSMPPPPPA) the composition is skewed to pro residues. The interval 145–242 (PNGFSNGPAT…IPFLKANLPL (98 aa)) is interaction with ZBTB33. The region spanning 171 to 266 (ARQLSKLKRF…TPAQYLAQHE (96 aa)) is the TAFH domain. An interaction with HIF1A region spans residues 176 to 268 (KLKRFLTTLQ…AQYLAQHEQL (93 aa)). Residues 284–342 (LLEVNENGKRRTPDRTKENGSDRDPLHPEHLSKRPCTLNPAQRYSPSNGPPQPTPPPHY) are disordered. Positions 289-315 (ENGKRRTPDRTKENGSDRDPLHPEHLS) are enriched in basic and acidic residues. Over residues 331-341 (NGPPQPTPPPH) the composition is skewed to pro residues. The tract at residues 394–412 (EEWKHLNNLLNCIMDMVEK) is nervy homology region 2 (NHR2); essential for down-regulation of PFKFB3, PFKFB4 and PDK1 expression. The span at 434 to 446 (WARRYSDAEDTKK) shows a compositional bias: basic and acidic residues. The disordered stretch occupies residues 434 to 472 (WARRYSDAEDTKKGPAPAAARPRSSSAGPEGPQLDVPRE). Positions 447 to 462 (GPAPAAARPRSSSAGP) are enriched in low complexity. Phosphoserine is present on residues Ser457 and Ser459. Residue Thr479 is modified to Phosphothreonine. Residues 485 to 506 (DIWRKAEEAVNEVKRQAMSELQ) are mediates interaction with PRKAR2A. Residues 485–533 (DIWRKAEEAVNEVKRQAMSELQKAVSDAERKAHELITTERAKMERALAE) form a nervy homology region 3 (NHR3); essential for down-regulation of PFKFB3, PFKFB4 and PDK1 expression region. The stretch at 488-543 (RKAEEAVNEVKRQAMSELQKAVSDAERKAHELITTERAKMERALAEAKRQASEDAL) forms a coiled coil. Cys556, Cys559, Cys567, Cys570, Cys576, Cys580, His588, and Cys592 together coordinate Zn(2+). The segment at 556–592 (CWNCGRKASETCSGCNAARYCGSFCQHRDWEKHHHVC) adopts an MYND-type zinc-finger fold. Residues 603–653 (VADPVPGPPEAAHSLGPSLPVGAASPSEAGSAGPSRPGSPSPPGPLDTVPR) are disordered. Residues 622–638 (PVGAASPSEAGSAGPSR) show a composition bias toward low complexity. Phosphoserine occurs at positions 637 and 641. A Phosphothreonine modification is found at Thr650.

It belongs to the CBFA2T family. As to quaternary structure, homooligomer. Homotetramerization is mediated by nervy homology region 2 (NRH2). Can interact with RUNX1T1 and CBFA2T2; heterotetramerization between members of the CBFA2T family is proposed. Component of a TAL-1 complex composed at least of CBFA2T3, LDB1, TAL1 and TCF3. Interacts with ERBB4, HDAC1, HDAC2, HDAC3, HDAC6, HDAC8, NCOR1, NCOR2, and ZNF652. According to PubMed:12242670, may not interact with HDAC6. Interacts with PLXNA1, PLXNA3 and PRKAR1A. Isoform 2 interacts with PRKAR2A, PDE7A and probably PDE4A. Interacts with ZBTB4, ZBTB38 and ZBTB33. Interacts with HIF1A and EGLN1. Interacts with the AML1-MTG8/ETO fusion protein. In terms of tissue distribution, widely expressed with higher expression in heart, pancreas, skeletal muscle, spleen, thymus and peripheral blood leukocytes. Expressed in hematopoietic cells (at protein level).

The protein resides in the nucleus. The protein localises to the nucleolus. Its subcellular location is the nucleoplasm. It localises to the golgi apparatus membrane. Its function is as follows. Transcriptional corepressor which facilitates transcriptional repression via its association with DNA-binding transcription factors and recruitment of other corepressors and histone-modifying enzymes. Can repress the expression of MMP7 in a ZBTB33-dependent manner. Reduces the protein levels and stability of the transcriptinal regulator HIF1A; interacts with EGLN1 and promotes the HIF1A prolyl hydroxylation-dependent ubiquitination and proteasomal degradation pathway. Contributes to inhibition of glycolysis and stimulation of mitochondrial respiration by down-regulating the expression of glycolytic genes including PFKFB3, PFKFB4, PDK1, PFKP, LDHA and HK1 which are direct targets of HIF1A. Regulates the proliferation and the differentiation of erythroid progenitors by repressing the expression of TAL1 target genes. Plays a role in granulocyte differentiation. Functionally, isoform 2 functions as an A-kinase-anchoring protein. The chain is Protein CBFA2T3 (CBFA2T3) from Homo sapiens (Human).